A 272-amino-acid polypeptide reads, in one-letter code: Undecaprenyl-diphosphatase (272 aa).

A run of 7 helical transmembrane segments spans residues 22–42 (FLPV…GFTG), 45–65 (AETF…VVFW), 92–112 (SHII…HDVI), 118–138 (PQSV…AEIL), 189–209 (YTAS…ASGL), 228–248 (VGFV…LALI), and 251–271 (ISFI…YWVF).

It belongs to the UppP family.

The protein resides in the cell inner membrane. The catalysed reaction is di-trans,octa-cis-undecaprenyl diphosphate + H2O = di-trans,octa-cis-undecaprenyl phosphate + phosphate + H(+). Catalyzes the dephosphorylation of undecaprenyl diphosphate (UPP). Confers resistance to bacitracin. The protein is Undecaprenyl-diphosphatase of Photorhabdus laumondii subsp. laumondii (strain DSM 15139 / CIP 105565 / TT01) (Photorhabdus luminescens subsp. laumondii).